The sequence spans 4377 residues: E3 ubiquitin-protein ligase HUWE1 (4377 aa).

S648 and S649 each carry phosphoserine. 3 disordered regions span residues 706-758, 978-1001, and 1018-1038; these read KADG…VVGT, DEKAGTTQGGKRSDGEQDGTAGSM, and TLAPMETDEPSSSDSKGKSKI. Residues 725–735 are compositionally biased toward acidic residues; the sequence is ASSEDEEEEEV. Polar residues predominate over residues 737 to 756; that stretch reads AMQSFNSAQQNETEPNQQVV. A Phosphoserine modification is found at S740. S1084 is modified (phosphoserine). A compositionally biased stretch (basic and acidic residues) spans 1291 to 1302; the sequence is LSKEKEGSRGEE. The segment at 1291 to 1320 is disordered; it reads LSKEKEGSRGEEEAGQEEGGSRREPQVNQQ. The UBA domain occupies 1316 to 1355; it reads QVNQQQLQQLMDMGFTREHAMEALLNTSTMEQATEYLLTH. Residues S1368, S1370, S1382, and S1395 each carry the phosphoserine modification. The UIM domain occupies 1370 to 1389; that stretch reads SEEDQMMRAIAMSLGQDIPM. Positions 1396–1415 are disordered; the sequence is PEEVACRKEEEERKAREKQE. Residues 1603–1680 enclose the WWE domain; that stretch reads RAQMTKYLQS…ETGNRRPVML (78 aa). The interval 1690-1733 is disordered; it reads KNSKSSNGQELEKTLEESKETDIKHKENKGNDIPLALESTNTEK. Over residues 1699 to 1719 the composition is skewed to basic and acidic residues; that stretch reads ELEKTLEESKETDIKHKENKG. A Phosphoserine modification is found at S1907. 3 disordered regions span residues 2019-2065, 2262-2343, and 2355-2479; these read APAE…SKPL, SLFG…QEMQ, and LLER…ASPL. Residues 2022–2033 show a composition bias toward polar residues; sequence ETSTTGTSQGEA. The residue at position 2035 (T2035) is a Phosphothreonine. Residues 2037–2057 show a composition bias toward basic and acidic residues; sequence EETREGKKDKEGDRTSEEGKQ. 2 stretches are compositionally biased toward low complexity: residues 2262–2271 and 2278–2291; these read SLFGSKSASS and DAQGASQDSSSHQQ. S2266 is subject to Phosphoserine. K2267 is modified (N6-acetyllysine). Acidic residues-rich tracts occupy residues 2295–2306 and 2314–2325; these read EPGEAEVQEEDH and ADGDIMDGEAET. Phosphoserine is present on residues S2362, S2365, and S2391. Over residues 2388–2398 the composition is skewed to polar residues; the sequence is SNLSQASTLQA. Residues 2408 to 2472 show a composition bias toward acidic residues; that stretch reads DPEDEEEHTQ…SEMELDEDYP (65 aa). 3 positions are modified to phosphoserine: S2527, S2532, and S2535. A Phosphothreonine modification is found at T2554. 3 positions are modified to phosphoserine: S2584, S2595, and S2619. Residues 2704-2716 are compositionally biased toward basic and acidic residues; sequence IIDKGKEDKENRD. Disordered regions lie at residues 2704 to 2970, 2991 to 3012, and 3036 to 3059; these read IIDK…GVDP, IRPPTRSAPSSNSSAPAVVGNP, and QQRAEQQRRELAQNASSDTPMDPV. Polar residues predominate over residues 2717–2736; it reads QSAQCTVTKTNDSTEQNVSD. Residues 2738–2756 are compositionally biased toward low complexity; the sequence is TPMPDSYPTTPSSTDAPTS. Position 2751 is a phosphothreonine (T2751). Composition is skewed to polar residues over residues 2818–2835, 2847–2864, and 2877–2890; these read AETTQMELSPAPTITSLS, AVSSQLEGSPMDTSSLAS, and AGSSEQPTAGSSTP. Phosphoserine is present on residues S2826, S2833, S2835, S2861, S2887, and S2888. T2889 carries the post-translational modification Phosphothreonine. 2 stretches are compositionally biased toward low complexity: residues 2913–2932 and 2993–3007; these read PPEDSSPPASSESSSTRDSA and PPTRSAPSSNSSAPA. The residue at position 2918 (S2918) is a Phosphoserine. Phosphoserine occurs at positions 3116, 3117, 3122, 3127, and 3135. R3149 bears the Omega-N-methylarginine mark. 5 disordered regions span residues 3243–3266, 3352–3383, 3405–3429, 3471–3514, and 3539–3566; these read PKLSTSEERGKKSSKSCASSSHEN, TQQRTKETNCESDRERGSKQACSPCSSQSSSS, GKNSVKSVPVSSGGEGETSPHSLEA, SEVQ…TTPV, and TPTTATTTVSTSTTKGSKSPAKVGEGGS. Basic and acidic residues predominate over residues 3355–3369; that stretch reads RTKETNCESDRERGS. The segment covering 3370–3383 has biased composition (low complexity); sequence KQACSPCSSQSSSS. Low complexity-rich tracts occupy residues 3475-3503 and 3539-3552; these read TNSSNSGSSTAATSNTSTTTTTTTTATAP and TPTTATTTVSTSTT. 6 positions are modified to phosphoserine: S3557, S3663, S3753, S3758, S3760, and S3761. Positions 3738–3759 are disordered; that stretch reads TRRANKKAKQTGRLGSSGLGSA. Residues 3749 to 3759 show a composition bias toward low complexity; the sequence is GRLGSSGLGSA. Disordered regions lie at residues 3782-3850 and 3897-3951; these read EGQR…LPLL and RESK…SSSL. A compositionally biased stretch (polar residues) spans 3794 to 3803; the sequence is TSESSNQSET. S3810, S3818, and S3830 each carry phosphoserine. A compositionally biased stretch (polar residues) spans 3817-3828; that stretch reads PSPSAQDTQSIV. Residue T3833 is modified to Phosphothreonine. 2 stretches are compositionally biased toward basic and acidic residues: residues 3836–3845 and 3897–3918; these read GEKEKEEKPP and RESKPPVRDTRESQLAHIKDEP. Phosphoserine occurs at positions 3909 and 3922. Pro residues predominate over residues 3919–3928; that stretch reads PPLSPAPLTP. Residues T3927 and T3930 each carry the phosphothreonine modification. Positions 3941 to 3951 are enriched in polar residues; that stretch reads EPSSMHISSSL. Residues 4041–4377 enclose the HECT domain; the sequence is SPEEMKNRLY…QECSEGFGLA (337 aa). Position 4274 is a phosphotyrosine (Y4274). Residue C4344 is the Glycyl thioester intermediate of the active site.

This sequence belongs to the UPL family. TOM1/PTR1 subfamily. As to quaternary structure, interacts with isoform p19ARF of CDKN2A which strongly inhibits HUWE1 ubiquitin ligase activity. Interacts with MYCN, POLB and CDC6. Interacts with PA2G4. Interacts with NR1D1. Interacts with AMBRA1. Interacts with HAPSTR1. Interacts with HAPSTR2. In hepatocytes, interacts with PAQR3; the interaction promotes PPARA poylubiquitination and STUB1-mediated degradation. Post-translationally, phosphorylated on tyrosine; phosphorylation is probably required for its ability to inhibit TP53 transactivation. In terms of tissue distribution, widely expressed.

Its subcellular location is the cytoplasm. It is found in the nucleus. The protein resides in the mitochondrion. It catalyses the reaction S-ubiquitinyl-[E2 ubiquitin-conjugating enzyme]-L-cysteine + [acceptor protein]-L-lysine = [E2 ubiquitin-conjugating enzyme]-L-cysteine + N(6)-ubiquitinyl-[acceptor protein]-L-lysine.. It functions in the pathway protein modification; protein ubiquitination. Its function is as follows. E3 ubiquitin-protein ligase which mediates ubiquitination and subsequent proteasomal degradation of target proteins. Regulates apoptosis by catalyzing the polyubiquitination and degradation of MCL1. Mediates monoubiquitination of DNA polymerase beta (POLB) at 'Lys-41', 'Lys-61' and 'Lys-81', thereby playing a role in base-excision repair. Also ubiquitinates the p53/TP53 tumor suppressor and core histones including H1, H2A, H2B, H3 and H4. Ubiquitinates MFN2 to negatively regulate mitochondrial fusion in response to decreased stearoylation of TFRC. Ubiquitination of MFN2 also takes place following induction of mitophagy; AMBRA1 acts as a cofactor for HUWE1-mediated ubiquitination. Regulates neural differentiation and proliferation by catalyzing the polyubiquitination and degradation of MYCN. May regulate abundance of CDC6 after DNA damage by polyubiquitinating and targeting CDC6 to degradation. Mediates polyubiquitination of PA2G4. Acts in concert with MYCBP2 to regulate the circadian clock gene expression by promoting the lithium-induced ubiquination and degradation of NR1D1. Binds to an upstream initiator-like sequence in the preprodynorphin gene. Mediates HAPSTR1 degradation, but is also a required cofactor in the pathway by which HAPSTR1 governs stress signaling. Acts as a regulator of the JNK and NF-kappa-B signaling pathways by mediating assembly of heterotypic 'Lys-63'-/'Lys-48'-linked branched ubiquitin chains that are then recognized by TAB2: HUWE1 mediates branching of 'Lys-48'-linked chains of substrates initially modified with 'Lys-63'-linked conjugates by TRAF6. 'Lys-63'-/'Lys-48'-linked branched ubiquitin chains protect 'Lys-63'-linkages from CYLD deubiquitination. Ubiquitinates PPARA in hepatocytes. This Mus musculus (Mouse) protein is E3 ubiquitin-protein ligase HUWE1 (Huwe1).